The primary structure comprises 199 residues: Large ribosomal subunit protein bL25 (199 aa).

This sequence belongs to the bacterial ribosomal protein bL25 family. CTC subfamily. Part of the 50S ribosomal subunit; part of the 5S rRNA/L5/L18/L25 subcomplex. Contacts the 5S rRNA. Binds to the 5S rRNA independently of L5 and L18.

In terms of biological role, this is one of the proteins that binds to the 5S RNA in the ribosome where it forms part of the central protuberance. The sequence is that of Large ribosomal subunit protein bL25 from Chlorobaculum tepidum (strain ATCC 49652 / DSM 12025 / NBRC 103806 / TLS) (Chlorobium tepidum).